Consider the following 130-residue polypeptide: Small ribosomal subunit protein uS9 (130 aa).

Belongs to the universal ribosomal protein uS9 family.

In Hydrogenovibrio crunogenus (strain DSM 25203 / XCL-2) (Thiomicrospira crunogena), this protein is Small ribosomal subunit protein uS9.